The following is an 853-amino-acid chain: DNA mismatch repair protein MutS (853 aa).

An ATP-binding site is contributed by 614-621 (GPNMGGKS).

The protein belongs to the DNA mismatch repair MutS family.

In terms of biological role, this protein is involved in the repair of mismatches in DNA. It is possible that it carries out the mismatch recognition step. This protein has a weak ATPase activity. This Escherichia coli (strain SMS-3-5 / SECEC) protein is DNA mismatch repair protein MutS.